Consider the following 44-residue polypeptide: Photosystem I reaction center subunit IX (44 aa).

A helical membrane pass occupies residues 7–27 (YLSVAPVISTLWFGSLAGLLI).

The protein belongs to the PsaJ family.

The protein resides in the plastid. Its subcellular location is the chloroplast thylakoid membrane. In terms of biological role, may help in the organization of the PsaE and PsaF subunits. The sequence is that of Photosystem I reaction center subunit IX from Ceratophyllum demersum (Rigid hornwort).